We begin with the raw amino-acid sequence, 418 residues long: Homoaconitase large subunit (418 aa).

Positions 292, 352, and 355 each coordinate [4Fe-4S] cluster.

It belongs to the aconitase/IPM isomerase family. In terms of assembly, heterodimer of HacA and HacB. The cofactor is [4Fe-4S] cluster.

It carries out the reaction (2R,3S)-homoisocitrate = cis-homoaconitate + H2O. It participates in amino-acid biosynthesis; L-lysine biosynthesis via AAA pathway; L-alpha-aminoadipate from 2-oxoglutarate: step 3/5. With respect to regulation, is not inhibited by lysine. Its function is as follows. Catalyzes the reversible hydration of cis-homoaconitate ((Z)-but-1-ene-1,2,4-tricarboxylate) to homoisocitrate ((1R,2S)-1-hydroxybutane-1,2,4-tricarboxylate). Can catalyze neither the dehydration of (R)-homocitrate ((2R)-2-hydroxybutane-1,2,4-tricarboxylate) into cis-homoaconitate in vitro, nor the reverse reaction. Is not active toward (S)-homocitrate, cis-aconitate or citrate as substrate. The protein is Homoaconitase large subunit (hacA) of Thermus thermophilus (strain ATCC BAA-163 / DSM 7039 / HB27).